The chain runs to 931 residues: GPI ethanolamine phosphate transferase 1 (931 aa).

Residue Met-1 is a topological domain, cytoplasmic. A helical membrane pass occupies residues 2-22 (LLFFALGLLIHFVFFASIFDI). Over 23 to 442 (YFTSPLVHGM…SYYHTYDRLF (420 aa)) the chain is Lumenal. 4 N-linked (GlcNAc...) asparagine glycosylation sites follow: Asn-128, Asn-192, Asn-295, and Asn-350. A helical transmembrane segment spans residues 443–463 (LGINVAVGFVGWMSYTSLLII). The Cytoplasmic portion of the chain corresponds to 464–480 (KSHSNIPKGTRKEGKKP). Residues 481-501 (HCLLLYSFIATGVLVACFLMI) traverse the membrane as a helical segment. Residue Gln-502 is a topological domain, lumenal. The chain crosses the membrane as a helical span at residues 503 to 523 (ACPWTYYVYCLLPVPIWYAVL). Residues 524–543 (REHEVIQDLVESLLTFPRSH) lie on the Cytoplasmic side of the membrane. The helical transmembrane segment at 544–564 (FVAYLLVFTLGIEVLVLSFFY) threads the bilayer. A topological domain (lumenal) is located at residue Arg-565. The chain crosses the membrane as a helical span at residues 566–586 (YMLTAGLIVFAGWPFLTQLWT). At 587–591 (RAKIT) the chain is on the cytoplasmic side. Residues 592–612 (FLSWAFFSLLLAVFPLMPVVG) traverse the membrane as a helical segment. The Lumenal segment spans residues 613-618 (RKPNLS). Asn-616 carries N-linked (GlcNAc...) asparagine glycosylation. Residues 619–639 (LVMGAGFLVLLLSLAVVTTLG) form a helical membrane-spanning segment. Topologically, residues 640-649 (KRNIKLVKGE) are cytoplasmic. Residues 650 to 670 (LLVLLLQMLSTVLSMYVVYST) traverse the membrane as a helical segment. Residues 671 to 685 (HHSLLKKEGLPLMNQ) are Lumenal-facing. Residues 686–706 (IVSWATLASSLVAPLLSSTAL) form a helical membrane-spanning segment. The Cytoplasmic segment spans residues 707–723 (SQRLASILLSLMSTYLL). Residues 724–744 (LSTGYEALFPLVLSCLMFVWI) traverse the membrane as a helical segment. The Lumenal portion of the chain corresponds to 745–786 (QVEQETLQQPGVSCKQKLTSIQFTCDTDIAQFRQLCPDDIRR). A helical transmembrane segment spans residues 787-807 (AFFLVFFLLTAFFGTGNIASI). The Cytoplasmic portion of the chain corresponds to 808–824 (NSFDLASVYCFLTVFSP). Residues 825 to 845 (FMMGALMMWKILIPFVLVMCA) traverse the membrane as a helical segment. The Lumenal portion of the chain corresponds to 846–858 (FEAVQITTQLSSK). Residues 859–879 (GLFLVVLIISDIMALHFFFLV) traverse the membrane as a helical segment. Residues 880–894 (KDSGSWLDIGTSISH) are Cytoplasmic-facing. The chain crosses the membrane as a helical span at residues 895–915 (YVIVMSMTIFLVFLNGLAQLL). The Lumenal portion of the chain corresponds to 916 to 931 (TTKKLQLCGKPKSHLM).

The protein belongs to the PIGG/PIGN/PIGO family. PIGN subfamily.

It localises to the endoplasmic reticulum membrane. Its pathway is glycolipid biosynthesis; glycosylphosphatidylinositol-anchor biosynthesis. Ethanolamine phosphate transferase that catalyzes an ethanolamine phosphate (EtNP) transfer from phosphatidylethanolamine (PE) to the 2-OH position of the first alpha-1,4-linked mannose of the alpha-D-Man-(1-&gt;6)-alpha-D-Man-(1-&gt;4)-alpha-D-GlcN-(1-&gt;6)-(1-radyl,2-acyl-sn-glycero-3-phospho)-2-acyl-inositol (also termed H3) intermediate to generate an alpha-D-Man-(1-&gt;6)-2-PEtn-alpha-D-Man-(1-&gt;4)-alpha-D-GlcN-(1-&gt;6)-(1-radyl,2-acyl-sn-glycero-3-phospho)-2-acyl-inositol and participates in the eighth step of the glycosylphosphatidylinositol-anchor biosynthesis. May act as suppressor of replication stress and chromosome missegregation. The sequence is that of GPI ethanolamine phosphate transferase 1 from Mus musculus (Mouse).